We begin with the raw amino-acid sequence, 1025 residues long: Probable outer membrane protein PmpF (1025 aa).

The signal sequence occupies residues Met1 to Ala20. Residues Asn654–Thr681 are disordered. Polar residues predominate over residues Gln659 to Thr681. In terms of domain architecture, Autotransporter spans Leu748 to Phe1025.

The protein belongs to the PMP outer membrane protein family.

The protein localises to the secreted. The protein resides in the cell wall. It is found in the cell outer membrane. This is Probable outer membrane protein PmpF (pmpF) from Chlamydia muridarum (strain MoPn / Nigg).